We begin with the raw amino-acid sequence, 330 residues long: MSIIVTGAAGFIGSNLLQALNRRGETDIIAVDDLTDGEQFRNLADADIADYLDQNDFLERYARGDFGTVRALFHQGACASTLESNGRYMMENNYRYSCRLLESSLELGVPFLYASSAAVYGSGRTFREARQYERPLNVYGYSKFLFDQRVRRALPQARSQVVGLRYFNVYGPREEHKGRMASVAYHCYQQLRRDGRVELFGEHGGFPPGGHLRDFVAVEDVARVNLHFFDHPQRSGIFNLGSGQARTFNEVALAVINSVRANADQPPLSLQQAVESGLLGYREFPESLRARYQSHTCADLELLREAGYRDDFQSLEEGVAGYCRWLARSA.

Residues 11–12 (FI), 32–33 (DD), Gln-39, Gln-54, 75–79 (QGACA), and Asn-92 contribute to the NADP(+) site. The Proton acceptor role is filled by Tyr-139. Lys-143 contributes to the NADP(+) binding site. Asn-168 lines the substrate pocket. 2 residues coordinate NADP(+): Val-169 and Lys-177. Lys-177 functions as the Proton acceptor in the catalytic mechanism. Residues Arg-179, His-186, 200–203 (FGEH), Arg-213, and Tyr-292 each bind substrate.

Belongs to the NAD(P)-dependent epimerase/dehydratase family. HldD subfamily. Homopentamer. Requires NADP(+) as cofactor.

It carries out the reaction ADP-D-glycero-beta-D-manno-heptose = ADP-L-glycero-beta-D-manno-heptose. It participates in nucleotide-sugar biosynthesis; ADP-L-glycero-beta-D-manno-heptose biosynthesis; ADP-L-glycero-beta-D-manno-heptose from D-glycero-beta-D-manno-heptose 7-phosphate: step 4/4. The protein operates within bacterial outer membrane biogenesis; LPS core biosynthesis. Functionally, catalyzes the interconversion between ADP-D-glycero-beta-D-manno-heptose and ADP-L-glycero-beta-D-manno-heptose via an epimerization at carbon 6 of the heptose. This is ADP-L-glycero-D-manno-heptose-6-epimerase from Pseudomonas aeruginosa (strain ATCC 15692 / DSM 22644 / CIP 104116 / JCM 14847 / LMG 12228 / 1C / PRS 101 / PAO1).